Reading from the N-terminus, the 141-residue chain is Small ribosomal subunit protein eS12 (141 aa).

Belongs to the eukaryotic ribosomal protein eS12 family. Component of the small ribosomal subunit. Mature ribosomes consist of a small (40S) and a large (60S) subunit. The 40S subunit contains about 32 different proteins and 1 molecule of RNA (18S). The 60S subunit contains about 42 different proteins and 3 molecules of RNA (28S, 5.8S and 5S).

It localises to the cytoplasm. Functionally, component of the ribosome, a large ribonucleoprotein complex responsible for the synthesis of proteins in the cell. The small ribosomal subunit (SSU) binds messenger RNAs (mRNAs) and translates the encoded message by selecting cognate aminoacyl-transfer RNA (tRNA) molecules. The large subunit (LSU) contains the ribosomal catalytic site termed the peptidyl transferase center (PTC), which catalyzes the formation of peptide bonds, thereby polymerizing the amino acids delivered by tRNAs into a polypeptide chain. The nascent polypeptides leave the ribosome through a tunnel in the LSU and interact with protein factors that function in enzymatic processing, targeting, and the membrane insertion of nascent chains at the exit of the ribosomal tunnel. The polypeptide is Small ribosomal subunit protein eS12 (Plasmodium falciparum (isolate 3D7)).